Reading from the N-terminus, the 359-residue chain is Peptide chain release factor 1 (359 aa).

Q235 bears the N5-methylglutamine mark.

The protein belongs to the prokaryotic/mitochondrial release factor family. Post-translationally, methylated by PrmC. Methylation increases the termination efficiency of RF1.

It is found in the cytoplasm. Peptide chain release factor 1 directs the termination of translation in response to the peptide chain termination codons UAG and UAA. The protein is Peptide chain release factor 1 of Nitrosomonas eutropha (strain DSM 101675 / C91 / Nm57).